The following is a 186-amino-acid chain: Probable calcium-binding protein CML25 (186 aa).

Residues M1–G17 are compositionally biased toward low complexity. The disordered stretch occupies residues M1–P23. EF-hand domains follow at residues T33–E68, V69–Q104, D106–E141, and C142–R177. Ca(2+) is bound by residues D46, N48, D50, K52, and E57. The Ca(2+) site is built by D119, D121, N123, S125, E130, D155, D157, D159, T161, and E166.

In terms of biological role, potential calcium sensor. The chain is Probable calcium-binding protein CML25 (CML25) from Arabidopsis thaliana (Mouse-ear cress).